We begin with the raw amino-acid sequence, 135 residues long: Large ribosomal subunit protein uL16c (135 aa).

This sequence belongs to the universal ribosomal protein uL16 family. In terms of assembly, part of the 50S ribosomal subunit.

It localises to the plastid. It is found in the chloroplast. The protein is Large ribosomal subunit protein uL16c of Acorus calamus var. americanus (American sweet flag).